Reading from the N-terminus, the 132-residue chain is Small ribosomal subunit protein uS11 (132 aa).

The protein belongs to the universal ribosomal protein uS11 family. Part of the 30S ribosomal subunit.

Located on the platform of the 30S subunit. The polypeptide is Small ribosomal subunit protein uS11 (Caldivirga maquilingensis (strain ATCC 700844 / DSM 13496 / JCM 10307 / IC-167)).